We begin with the raw amino-acid sequence, 647 residues long: Shugoshin-2 (647 aa).

Ser7 carries the post-translational modification Phosphoserine. Coiled-coil stretches lie at residues 28-87 and 125-145; these read SKAQ…FHEE and DEES…HDVS. The segment at 171-295 is disordered; sequence REANVFSDTQ…DTVIQSTPTK (125 aa). A compositionally biased stretch (low complexity) spans 200 to 210; the sequence is NLSNSKPVNNN. Ser240 is subject to Phosphoserine. 2 stretches are compositionally biased toward polar residues: residues 242 to 253 and 282 to 293; these read KSLSNKINNQAA and RIQSDTVIQSTP. Residue Thr292 is modified to Phosphothreonine. Phosphoserine occurs at positions 332 and 335. 2 stretches are compositionally biased toward polar residues: residues 375–396 and 462–478; these read SLTS…NMTV and EPPS…NNSP. Disordered regions lie at residues 375 to 416, 453 to 486, 522 to 579, and 593 to 647; these read SLTS…DSSV, RNPP…SLQG, TNLK…ERKK, and RNFD…TLNL. 2 stretches are compositionally biased toward basic and acidic residues: residues 528-541 and 593-602; these read NEND…SRRE and RNFDLPSDHV. The span at 621-647 shows a compositional bias: polar residues; it reads KTETANITSEAPTTSEVTLENSETLNL.

The protein belongs to the shugoshin family.

The protein localises to the chromosome. It localises to the centromere. Its function is as follows. Involved in chromosome cohesion during mitosis and meiosis by preventing premature dissociation of cohesin complex from centromeres after prophase, when most of cohesin complex dissociates from chromosomes arms. Required for faithful mitotic chromosome segregation and proper kinetochore orientation during meiosis I. In contrast to sgo1, it is dispensable for centromeric protection of rec8 during meiosis I as well as protection of rad21 during mitosis. Required to sense the lack of tension at centromeres during mitosis. The polypeptide is Shugoshin-2 (sgo2) (Schizosaccharomyces pombe (strain 972 / ATCC 24843) (Fission yeast)).